The following is a 391-amino-acid chain: Elongation factor Tu (391 aa).

The tr-type G domain occupies 10 to 201 (KPHVNIGTIG…AVDDYIPTPE (192 aa)). The G1 stretch occupies residues 19-26 (GHVDHGKT). 19 to 26 (GHVDHGKT) provides a ligand contact to GTP. Thr-26 contacts Mg(2+). The G2 stretch occupies residues 55–59 (GITIS). The tract at residues 76-79 (DCPG) is G3. Residues 76–80 (DCPGH) and 131–134 (NKVD) contribute to the GTP site. The tract at residues 131–134 (NKVD) is G4. Residues 169–171 (SAL) are G5.

This sequence belongs to the TRAFAC class translation factor GTPase superfamily. Classic translation factor GTPase family. EF-Tu/EF-1A subfamily. Monomer.

It localises to the cytoplasm. The catalysed reaction is GTP + H2O = GDP + phosphate + H(+). Functionally, GTP hydrolase that promotes the GTP-dependent binding of aminoacyl-tRNA to the A-site of ribosomes during protein biosynthesis. The sequence is that of Elongation factor Tu from Paracoccus denitrificans (strain Pd 1222).